The primary structure comprises 537 residues: MDCKVVSLNEKDQFIPKIKSSDPVITGLFQYDAAQQTSFEKRMSKENNGREAALANVIREYMSDLKLSNEQELNIQHLANGSKVVIGGQQAGLFGGPLYTFHKIFSIITLSKELTDTHKQQVVPVFWIAGEDHDFDEVNHTFVYNENHGSLHKVKYHTMEMPETTVSRYYPDKAELKQTLKTMFIHMKETVHTQGLLEICDRIIDQYDSWTDMFKALLHETFKAYGVLFIDAQFEPLRKMEAPMFKKILKKHQLLDDAFRATQQRTQNQGLNAMIQTDTNVHLFLHDENMRQLVSYDGKHFKLNKTDKTYIKEEIINIAENQPELFSNNVVTRPLMEEWLFNTVAFVGGPSEIKYWAELKDVFELFDVEMPIVMPRLRITYLNDRIEKLLSKYNIPLEKVLVDGVEGERSKFIREQASHQFIEKVEGMIEQQRRLNKDLLDEVAGNQNNINLVNKNNEIHIQQYDYLLKRYLLNIERENDISMKQFREIQETLHPMGGLQERIWNPLQILNDFGTDVFKPSTYPPLSYTFDHIIIKP.

Positions 422-450 (IEKVEGMIEQQRRLNKDLLDEVAGNQNNI) form a coiled coil.

This sequence belongs to the BshC family.

Its function is as follows. Involved in bacillithiol (BSH) biosynthesis. May catalyze the last step of the pathway, the addition of cysteine to glucosamine malate (GlcN-Mal) to generate BSH. The protein is Putative cysteine ligase BshC of Staphylococcus aureus (strain Mu3 / ATCC 700698).